We begin with the raw amino-acid sequence, 114 residues long: MAAGRVWGRLGAVSGALAVTAGAYGAHGFRRSDRDEYLKELFETGNRYHFLHSLALLAVPHCRRPLLAGSLLTSGIVLFSGTFYYQALSGDPTLTKAAPYGGTLLILGWAAMAL.

Residues 1–25 form the signal peptide; that stretch reads MAAGRVWGRLGAVSGALAVTAGAYG. Over 26-64 the chain is Extracellular; that stretch reads AHGFRRSDRDEYLKELFETGNRYHFLHSLALLAVPHCRR. A helical membrane pass occupies residues 65-85; it reads PLLAGSLLTSGIVLFSGTFYY. Topologically, residues 86-93 are cytoplasmic; the sequence is QALSGDPT. A helical transmembrane segment spans residues 94-114; sequence LTKAAPYGGTLLILGWAAMAL.

It belongs to the TMEM256 family.

Its subcellular location is the cell membrane. This Bufo gargarizans (Asian toad) protein is Transmembrane protein 256 homolog.